The primary structure comprises 295 residues: Pyridoxal 5'-phosphate synthase subunit PdxS (295 aa).

Aspartate 25 is a D-ribose 5-phosphate binding site. The Schiff-base intermediate with D-ribose 5-phosphate role is filled by lysine 82. Glycine 154 serves as a coordination point for D-ribose 5-phosphate. Arginine 166 provides a ligand contact to D-glyceraldehyde 3-phosphate. D-ribose 5-phosphate contacts are provided by residues glycine 215 and 236–237; that span reads GS.

Belongs to the PdxS/SNZ family. In the presence of PdxT, forms a dodecamer of heterodimers.

It catalyses the reaction aldehydo-D-ribose 5-phosphate + D-glyceraldehyde 3-phosphate + L-glutamine = pyridoxal 5'-phosphate + L-glutamate + phosphate + 3 H2O + H(+). It participates in cofactor biosynthesis; pyridoxal 5'-phosphate biosynthesis. Catalyzes the formation of pyridoxal 5'-phosphate from ribose 5-phosphate (RBP), glyceraldehyde 3-phosphate (G3P) and ammonia. The ammonia is provided by the PdxT subunit. Can also use ribulose 5-phosphate and dihydroxyacetone phosphate as substrates, resulting from enzyme-catalyzed isomerization of RBP and G3P, respectively. The protein is Pyridoxal 5'-phosphate synthase subunit PdxS of Haemophilus ducreyi (strain 35000HP / ATCC 700724).